A 23-amino-acid chain; its full sequence is Phallacidin proprotein 1 (23 aa).

A propeptide is located at residue Pro-1. The cyclopeptide (Ala-Pro) cross-link spans 2–8; the sequence is AWLVDCP. Residues 3–7 constitute a cross-link (2'-cysteinyl-6'-hydroxytryptophan sulfoxide (Trp-Cys)); that stretch reads WLVDC. The propeptide occupies 9-23; it reads CVGDDINRLLTRGEK.

It belongs to the MSDIN fungal toxin family. Post-translationally, processed by the macrocyclase-peptidase enzyme POPB to yield a toxic cyclic heptapeptide. POPB first removes 10 residues from the N-terminus. Conformational trapping of the remaining peptide forces the enzyme to release this intermediate rather than proceed to macrocyclization. The enzyme rebinds the remaining peptide in a different conformation and catalyzes macrocyclization of the N-terminal 7 residues.

Major toxin that belongs to the bicyclic heptapeptides called phallotoxins. Although structurally related to amatoxins, phallotoxins have a different mode of action, which is the stabilization of F-actin. Phallotoxins are poisonous when administered parenterally, but not orally because of poor absorption. In Amanita phalloides (Death cap), this protein is Phallacidin proprotein 1.